The primary structure comprises 157 residues: Small ribosomal subunit protein uS7 (157 aa).

This sequence belongs to the universal ribosomal protein uS7 family. As to quaternary structure, part of the 30S ribosomal subunit. Contacts proteins S9 and S11.

Its function is as follows. One of the primary rRNA binding proteins, it binds directly to 16S rRNA where it nucleates assembly of the head domain of the 30S subunit. Is located at the subunit interface close to the decoding center, probably blocks exit of the E-site tRNA. In Hydrogenovibrio crunogenus (strain DSM 25203 / XCL-2) (Thiomicrospira crunogena), this protein is Small ribosomal subunit protein uS7.